The primary structure comprises 995 residues: uncharacterized protein (995 aa).

This is an uncharacterized protein from Caenorhabditis elegans.